We begin with the raw amino-acid sequence, 204 residues long: Holliday junction resolvase RecU (204 aa).

4 residues coordinate Mg(2+): T89, D91, D104, and Q123.

Belongs to the RecU family. Mg(2+) is required as a cofactor.

The protein localises to the cytoplasm. The enzyme catalyses Endonucleolytic cleavage at a junction such as a reciprocal single-stranded crossover between two homologous DNA duplexes (Holliday junction).. Functionally, endonuclease that resolves Holliday junction intermediates in genetic recombination. Cleaves mobile four-strand junctions by introducing symmetrical nicks in paired strands. Promotes annealing of linear ssDNA with homologous dsDNA. Required for DNA repair, homologous recombination and chromosome segregation. This is Holliday junction resolvase RecU from Leuconostoc mesenteroides subsp. mesenteroides (strain ATCC 8293 / DSM 20343 / BCRC 11652 / CCM 1803 / JCM 6124 / NCDO 523 / NBRC 100496 / NCIMB 8023 / NCTC 12954 / NRRL B-1118 / 37Y).